We begin with the raw amino-acid sequence, 296 residues long: 4-hydroxybenzoate octaprenyltransferase (296 aa).

Helical transmembrane passes span 29–49 (AGWLLLLWPTLSALWVAAGGF), 52–72 (WHLLSVFTLGTILMRSAGCCI), 103–123 (LVLGAVLALLAFALVLTTNAI), 151–171 (VLGVAFGMGIPMAFAAVLGEV), 176–196 (WLLMLGNLFWVLAYDTEYAMV), 220–240 (VILLCYLAFIVIWDVALMPYV), 243–263 (ALFTIAFALAFGQVAWHYTLI), and 275–295 (FRLNHWLGFTLFVGIAGSYAL).

This sequence belongs to the UbiA prenyltransferase family. Requires Mg(2+) as cofactor.

Its subcellular location is the cell inner membrane. It carries out the reaction all-trans-octaprenyl diphosphate + 4-hydroxybenzoate = 4-hydroxy-3-(all-trans-octaprenyl)benzoate + diphosphate. It participates in cofactor biosynthesis; ubiquinone biosynthesis. Functionally, catalyzes the prenylation of para-hydroxybenzoate (PHB) with an all-trans polyprenyl group. Mediates the second step in the final reaction sequence of ubiquinone-8 (UQ-8) biosynthesis, which is the condensation of the polyisoprenoid side chain with PHB, generating the first membrane-bound Q intermediate 3-octaprenyl-4-hydroxybenzoate. In Albidiferax ferrireducens (strain ATCC BAA-621 / DSM 15236 / T118) (Rhodoferax ferrireducens), this protein is 4-hydroxybenzoate octaprenyltransferase.